The primary structure comprises 70 residues: Translational regulator CsrA (70 aa).

It belongs to the CsrA/RsmA family. As to quaternary structure, homodimer; the beta-strands of each monomer intercalate to form a hydrophobic core, while the alpha-helices form wings that extend away from the core.

It localises to the cytoplasm. In terms of biological role, a translational regulator that binds mRNA to regulate translation initiation and/or mRNA stability. Usually binds in the 5'-UTR at or near the Shine-Dalgarno sequence preventing ribosome-binding, thus repressing translation. Its main target seems to be the major flagellin gene, while its function is anatagonized by FliW. This is Translational regulator CsrA from Rhodopirellula baltica (strain DSM 10527 / NCIMB 13988 / SH1).